The chain runs to 39 residues: Cytochrome b6-f complex subunit 5 (39 aa).

Residues leucine 5 to alanine 25 traverse the membrane as a helical segment.

It belongs to the PetG family. As to quaternary structure, the 4 large subunits of the cytochrome b6-f complex are cytochrome b6, subunit IV (17 kDa polypeptide, PetD), cytochrome f and the Rieske protein, while the 4 small subunits are PetG, PetL, PetM and PetN. The complex functions as a dimer.

It is found in the cellular thylakoid membrane. Functionally, component of the cytochrome b6-f complex, which mediates electron transfer between photosystem II (PSII) and photosystem I (PSI), cyclic electron flow around PSI, and state transitions. PetG is required for either the stability or assembly of the cytochrome b6-f complex. This chain is Cytochrome b6-f complex subunit 5, found in Prochlorococcus marinus (strain MIT 9515).